Reading from the N-terminus, the 116-residue chain is Helper of Tim protein 13 (116 aa).

The CHY-type; degenerate zinc-finger motif lies at 10–94 (TVDDQSRCVH…SNLICPNCRS (85 aa)). Zn(2+)-binding residues include cysteine 17, histidine 19, cysteine 40, cysteine 43, cysteine 68, cysteine 71, cysteine 89, and cysteine 92.

As to quaternary structure, interacts with the small Tim proteins TIM8, TIM9, TIM10, TIM12, and TIM13.

The protein resides in the mitochondrion intermembrane space. The protein localises to the mitochondrion membrane. Required for the assembly or recycling of the small Tim proteins in the mitochondrial intermembrane, thereby participating in the import and insertion of multi-pass transmembrane proteins into the mitochondrial inner membrane. Probably acts by facilitating the formation of disulfide bonds in small Tim proteins. The sequence is that of Helper of Tim protein 13 (HOT13) from Saccharomyces cerevisiae (strain ATCC 204508 / S288c) (Baker's yeast).